The chain runs to 201 residues: Large ribosomal subunit protein uL4 (201 aa).

The tract at residues 42 to 67 is disordered; it reads GNSAQKTRSEVSGGGKKPWNQKGTGR.

The protein belongs to the universal ribosomal protein uL4 family. Part of the 50S ribosomal subunit.

In terms of biological role, one of the primary rRNA binding proteins, this protein initially binds near the 5'-end of the 23S rRNA. It is important during the early stages of 50S assembly. It makes multiple contacts with different domains of the 23S rRNA in the assembled 50S subunit and ribosome. Functionally, forms part of the polypeptide exit tunnel. The chain is Large ribosomal subunit protein uL4 from Legionella pneumophila (strain Paris).